We begin with the raw amino-acid sequence, 566 residues long: E3 ubiquitin-protein ligase RNF220 (566 aa).

Lys277 is covalently cross-linked (Glycyl lysine isopeptide (Lys-Gly) (interchain with G-Cter in SUMO2)). Residues 277–297 (KREGESPTASPHSSATDDLHH) form a disordered region. Residue Ser390 is modified to Phosphoserine. A coiled-coil region spans residues 485–513 (EDSAVTTFEALKARVRELERQLSRGDRYK). The tract at residues 514-522 (CLICMDSYS) is required for targeting to the cytoplasm. The segment at 514 to 553 (CLICMDSYSMPLTSIQCWHVHCEECWLRTLGAKKLCPQCY) adopts an RING-type zinc-finger fold.

Interacts with SIN3B. Interacts with CTNNB1 (via Armadillo repeats 2-8). Interacts with USP7 (via MATH domain). Auto-ubiquitinated; leads to proteasomal degradation.

It localises to the cytoplasm. It catalyses the reaction S-ubiquitinyl-[E2 ubiquitin-conjugating enzyme]-L-cysteine + [acceptor protein]-L-lysine = [E2 ubiquitin-conjugating enzyme]-L-cysteine + N(6)-ubiquitinyl-[acceptor protein]-L-lysine.. It functions in the pathway protein modification; protein ubiquitination. In terms of biological role, E3 ubiquitin-protein ligase that promotes the ubiquitination and proteasomal degradation of SIN3B. Independently of its E3 ligase activity, acts as a CTNNB1 stabilizer through USP7-mediated deubiquitination of CTNNB1 promoting Wnt signaling. The chain is E3 ubiquitin-protein ligase RNF220 (RNF220) from Bos taurus (Bovine).